Consider the following 611-residue polypeptide: Mitochondrial import receptor subunit TOM70 (611 aa).

Position 2 is an N-acetylalanine (Ala2). Residues 2 to 41 (AASKPIEAAMAAAAAPGSGNGVGGGGGTAGPGSGAGTLPR) are Mitochondrial intermembrane-facing. The helical transmembrane segment at 42-62 (WHVALAIGAPLLLGAGAMYLW) threads the bilayer. Residues 63-611 (SRRRRRREAG…KKYGLKPPTL (549 aa)) are Cytoplasmic-facing. Positions 69–110 (REAGGRGDASGLKRNSERKTPEGRASPALGSGHHDGSGDSLE) are disordered. Omega-N-methylarginine is present on Arg74. Phosphoserine occurs at positions 94, 99, 105, 108, and 113. TPR repeat units follow at residues 117-150 (AQAA…CPTE) and 156-189 (STFY…NPKY). Lys188 carries the post-translational modification N6-acetyllysine. A Glycyl lysine isopeptide (Lys-Gly) (interchain with G-Cter in SUMO2) cross-link involves residue Lys278. 8 TPR repeats span residues 297-330 (ENSG…QGKY), 332-365 (AEAL…KEAN), 370-403 (ANAL…DPMN), 404-437 (SDVY…RPKF), 445-478 (CFAL…FPRC), 479-512 (AEGY…EPDN), 514-547 (TTYV…DNKC), and 548-581 (DFAY…AKSE).

It belongs to the Tom70 family. Forms part of the preprotein translocase complex of the outer mitochondrial membrane (TOM complex) which consists of at least 7 different proteins (TOMM5, TOMM6, TOMM7, TOMM20, TOMM22, TOMM40 and TOMM70). Interacts with CAPN8. Interacts with TRADD, TRAF6 and STING. Interacts with MAVS. Interacts with HSPA8 and HSP90AA1; both interactions are required for preprotein mitochondrial import. The interaction with HSP90AA1 is direct and mediates the association of TOMM70 with IRF3 and TBK1. Upon mitochondrial depolarization, interacts with PINK1; the interaction is required for PINK1-TOM-TIM23 supercomplex formation which is critical for PINK1 stabilization at the outer mitochondrial membrane, kinase activation and downstream mitophagy. As to expression, expressed in the base region of the oxyntic and pyloric mucosae.

The protein resides in the mitochondrion outer membrane. Acts as a receptor of the preprotein translocase complex of the outer mitochondrial membrane (TOM complex). Recognizes and mediates the translocation of mitochondrial preproteins from the cytosol into the mitochondria in a chaperone dependent manner. Mediates TBK1 and IRF3 activation induced by MAVS in response to virus infection and promotes host antiviral responses during virus infection. The protein is Mitochondrial import receptor subunit TOM70 of Mus musculus (Mouse).